The primary structure comprises 70 residues: Ribosome modulation factor (70 aa).

It belongs to the ribosome modulation factor family.

It localises to the cytoplasm. During stationary phase, converts 70S ribosomes to an inactive dimeric form (100S ribosomes). The chain is Ribosome modulation factor from Marinobacter adhaerens (strain DSM 23420 / HP15).